Reading from the N-terminus, the 238-residue chain is Sugar fermentation stimulation protein homolog (238 aa).

Belongs to the SfsA family.

This chain is Sugar fermentation stimulation protein homolog, found in Haemophilus influenzae (strain PittGG).